The following is a 20-amino-acid chain: Trypsin inhibitor A chain (20 aa).

This sequence belongs to the protease inhibitor I3 (leguminous Kunitz-type inhibitor) family. Heterodimer of an 'A' and a 'B' chain linked by a disulfide bond.

Its function is as follows. Inhibits trypsin and alpha-chymotrypsin. The protein is Trypsin inhibitor A chain of Albizia julibrissin (Silk tree).